We begin with the raw amino-acid sequence, 330 residues long: Aspartate--ammonia ligase (330 aa).

Belongs to the class-II aminoacyl-tRNA synthetase family. AsnA subfamily.

Its subcellular location is the cytoplasm. It catalyses the reaction L-aspartate + NH4(+) + ATP = L-asparagine + AMP + diphosphate + H(+). It participates in amino-acid biosynthesis; L-asparagine biosynthesis; L-asparagine from L-aspartate (ammonia route): step 1/1. The polypeptide is Aspartate--ammonia ligase (Klebsiella pneumoniae (strain 342)).